We begin with the raw amino-acid sequence, 24 residues long: M-poneritoxin-Ng2b (24 aa).

At Leu-24 the chain carries Leucine amide.

Expressed by the venom gland.

Its subcellular location is the secreted. Its function is as follows. Has a broad spectrum of activity against both Gram-positive and Gram-negative bacteria. Is inactive against yeast, erythrocytes, and insects. This is M-poneritoxin-Ng2b from Neoponera goeldii (Ponerine ant).